A 540-amino-acid polypeptide reads, in one-letter code: MLO protein homolog 1 (540 aa).

Over 1–16 (MAGGRSGSRELPETPT) the chain is Extracellular. A helical membrane pass occupies residues 17–37 (WAVAVVCAVLVLVSVAMEHGL). The Cytoplasmic portion of the chain corresponds to 38-60 (HNLSHWFRRRQKKAMGDALDKIK). The helical transmembrane segment at 61-81 (AELMLLGFISLLLTVAQAPIS) threads the bilayer. Over 82-142 (KICIPKSAAN…MSAKSMHQLH (61 aa)) the chain is Extracellular. A helical membrane pass occupies residues 143-163 (IFIFVLAVFHVTYCVITMGLG). At 164 to 265 (RLKMKKWKKW…IKRSLEDDFK (102 aa)) the chain is on the cytoplasmic side. Residues 266–286 (VVVGISLPLWFVGILVLFLDI) traverse the membrane as a helical segment. A topological domain (extracellular) is located at residue His-287. Residues 288 to 308 (GLGTLIWISFVPLIIVLLVGT) traverse the membrane as a helical segment. The Cytoplasmic segment spans residues 309–347 (KLEMVIMQMAQEIQDRATVIQGAPVVEPSNKYFWFNRPD). Residues 348 to 368 (WVLFFIHLTLFHNAFQMAHFV) form a helical membrane-spanning segment. Topologically, residues 369-383 (WTMATPGLKKCFHEN) are extracellular. The chain crosses the membrane as a helical span at residues 384-404 (IWLSIVEVIVGISLQVLCSYI). The Cytoplasmic portion of the chain corresponds to 405–540 (TFPLYALVTQ…DSDFSFSAQR (136 aa)). The calmodulin-binding stretch occupies residues 426 to 447 (EQTMKALMNWRKKAMEKKKVRD). A disordered region spans residues 468 to 526 (ASPVHLLQDHRARSDDPPSPITVASPPAPEEDIYPVPAAAASRQLLDDPPDRRWMASSS). 2 stretches are compositionally biased toward basic and acidic residues: residues 474–483 (LQDHRARSDD) and 512–521 (LLDDPPDRRW).

This sequence belongs to the MLO family.

The protein localises to the membrane. In terms of biological role, may be involved in modulation of pathogen defense and leaf cell death. Activity seems to be regulated by Ca(2+)-dependent calmodulin binding and seems not to require heterotrimeric G proteins. The protein is MLO protein homolog 1 (MLO1) of Oryza sativa subsp. japonica (Rice).